An 882-amino-acid chain; its full sequence is ABC transporter H family member 4 (882 aa).

3 helical membrane passes run 4 to 24 (WIKLKLTAIGWFIYGMPISVF), 35 to 55 (LLFKTIAVHYIIPLIIELLPW), and 79 to 101 (TNGPYSHSAVIKYVLLTIYYAIL). Residues 384 to 863 (FSYENKFSSE…NAQVYYKLLG (480 aa)) form the ABC transporter domain. Position 418-425 (418-425 (GQNRSGKS)) interacts with ATP. Disordered regions lie at residues 522–617 (FDPD…YSTI), 634–669 (SMSQLNNSGGGNVNGNNNNNNNNNNNNNININNSGV), and 710–730 (NSGGGDESDDDDEEAERNQRS). 2 stretches are compositionally biased toward low complexity: residues 528–617 (IPPT…YSTI) and 647–667 (NGNNNNNNNNNNNNNININNS). A compositionally biased stretch (acidic residues) spans 715-724 (DESDDDDEEA).

The protein belongs to the ABC transporter superfamily. ABCH family.

Its subcellular location is the membrane. This is ABC transporter H family member 4 (abcH4) from Dictyostelium discoideum (Social amoeba).